A 292-amino-acid chain; its full sequence is 4-diphosphocytidyl-2-C-methyl-D-erythritol kinase (292 aa).

Residue Lys-10 is part of the active site. ATP is bound at residue 100–110 (PIGSGLGGGSS). Residue Asp-142 is part of the active site.

The protein belongs to the GHMP kinase family. IspE subfamily. As to quaternary structure, homodimer.

It carries out the reaction 4-CDP-2-C-methyl-D-erythritol + ATP = 4-CDP-2-C-methyl-D-erythritol 2-phosphate + ADP + H(+). The protein operates within isoprenoid biosynthesis; isopentenyl diphosphate biosynthesis via DXP pathway; isopentenyl diphosphate from 1-deoxy-D-xylulose 5-phosphate: step 3/6. Catalyzes the phosphorylation of the position 2 hydroxy group of 4-diphosphocytidyl-2C-methyl-D-erythritol. The sequence is that of 4-diphosphocytidyl-2-C-methyl-D-erythritol kinase from Buchnera aphidicola subsp. Schizaphis graminum (strain Sg).